Here is a 555-residue protein sequence, read N- to C-terminus: 2-isopropylmalate synthase (555 aa).

The Pyruvate carboxyltransferase domain maps to 30 to 303 (PIWCSVDLRD…DPGLDCTDIN (274 aa)). Mg(2+)-binding residues include aspartate 39, histidine 242, histidine 244, and asparagine 278. Positions 437-555 (QPDARIKFVD…VSAANRVIAK (119 aa)) are regulatory domain.

This sequence belongs to the alpha-IPM synthase/homocitrate synthase family. LeuA type 2 subfamily. As to quaternary structure, homodimer. The cofactor is Mg(2+).

The protein resides in the cytoplasm. The enzyme catalyses 3-methyl-2-oxobutanoate + acetyl-CoA + H2O = (2S)-2-isopropylmalate + CoA + H(+). It participates in amino-acid biosynthesis; L-leucine biosynthesis; L-leucine from 3-methyl-2-oxobutanoate: step 1/4. In terms of biological role, catalyzes the condensation of the acetyl group of acetyl-CoA with 3-methyl-2-oxobutanoate (2-ketoisovalerate) to form 3-carboxy-3-hydroxy-4-methylpentanoate (2-isopropylmalate). The protein is 2-isopropylmalate synthase of Brucella suis biovar 1 (strain 1330).